Here is a 182-residue protein sequence, read N- to C-terminus: Large ribosomal subunit protein uL5 (182 aa).

This sequence belongs to the universal ribosomal protein uL5 family. In terms of assembly, part of the 50S ribosomal subunit; part of the 5S rRNA/L5/L18/L25 subcomplex. Contacts the 5S rRNA and the P site tRNA. Forms a bridge to the 30S subunit in the 70S ribosome.

Functionally, this is one of the proteins that bind and probably mediate the attachment of the 5S RNA into the large ribosomal subunit, where it forms part of the central protuberance. In the 70S ribosome it contacts protein S13 of the 30S subunit (bridge B1b), connecting the 2 subunits; this bridge is implicated in subunit movement. Contacts the P site tRNA; the 5S rRNA and some of its associated proteins might help stabilize positioning of ribosome-bound tRNAs. The polypeptide is Large ribosomal subunit protein uL5 (Nostoc punctiforme (strain ATCC 29133 / PCC 73102)).